The sequence spans 196 residues: ATP-dependent Clp protease proteolytic subunit (196 aa).

Catalysis depends on Ser-99, which acts as the Nucleophile. His-124 is a catalytic residue.

This sequence belongs to the peptidase S14 family. Fourteen ClpP subunits assemble into 2 heptameric rings which stack back to back to give a disk-like structure with a central cavity, resembling the structure of eukaryotic proteasomes.

Its subcellular location is the cytoplasm. It carries out the reaction Hydrolysis of proteins to small peptides in the presence of ATP and magnesium. alpha-casein is the usual test substrate. In the absence of ATP, only oligopeptides shorter than five residues are hydrolyzed (such as succinyl-Leu-Tyr-|-NHMec, and Leu-Tyr-Leu-|-Tyr-Trp, in which cleavage of the -Tyr-|-Leu- and -Tyr-|-Trp bonds also occurs).. In terms of biological role, cleaves peptides in various proteins in a process that requires ATP hydrolysis. Has a chymotrypsin-like activity. Plays a major role in the degradation of misfolded proteins. This is ATP-dependent Clp protease proteolytic subunit from Helicobacter pylori (strain ATCC 700392 / 26695) (Campylobacter pylori).